The chain runs to 825 residues: Endochitinase A1 (825 aa).

Residues 1–22 form the signal peptide; sequence MVSSKLSFVATAVAALAPLASA. Residues 29–338 enclose the GH18 domain; sequence SNLAIYWGQG…DHMKDILLHC (310 aa). The active-site Proton donor is Glu-174. 3 disordered regions span residues 338 to 568, 680 to 736, and 750 to 792; these read CDPS…TTTA, PVTE…VSTS, and PLIL…YTQE. The span at 344–554 shows a compositional bias: low complexity; that stretch reads VTSSSAVPSS…STDESSTTVG (211 aa). The N-linked (GlcNAc...) asparagine glycan is linked to Asn-559. Residues 701-712 show a composition bias toward polar residues; sequence EGSNPTQPSGAS. An N-linked (GlcNAc...) asparagine glycan is attached at Asn-717. The segment covering 772–792 has biased composition (polar residues); the sequence is PSGQNSGSSSHVPIPPSYTQE. Gly-800 carries GPI-anchor amidated glycine lipidation. A propeptide spans 801–825 (removed in mature form); that stretch reads AASRVTGLGHGLVLTVLTLSAFFVL.

The protein belongs to the glycosyl hydrolase 18 family. Chitinase class III subfamily. Post-translationally, O-mannosylated by pmt4.

It localises to the cell membrane. The protein localises to the secreted. It is found in the cell wall. It carries out the reaction Random endo-hydrolysis of N-acetyl-beta-D-glucosaminide (1-&gt;4)-beta-linkages in chitin and chitodextrins.. Its activity is regulated as follows. The cyclic peptide natural product argifin acts as a specific inhibitor. Functionally, GPI-anchored chitinase involved in the degradation of chitin, a component of the cell walls of fungi and exoskeletal elements of some animals (including worms and arthropods). Required to reshape the cell wall at the sites where cell wall remodeling and/or cell wall maturation actively take place such as sites of conidia formation. The protein is Endochitinase A1 (chiA1) of Aspergillus fumigatus (Neosartorya fumigata).